The following is an 883-amino-acid chain: Receptor-like protein 40 (883 aa).

A signal peptide spans 1–21 (MSELLFSLNFLLLLLLSCVSP). The Extracellular segment spans residues 22-846 (SSFFTFNNPV…EDEQVLNWKA (825 aa)). 3 N-linked (GlcNAc...) asparagine glycosylation sites follow: Asn58, Asn91, and Asn109. LRR repeat units lie at residues 97–121 (FHHL…KFGM) and 122–143 (LNNL…PFSF). A glycan (N-linked (GlcNAc...) asparagine) is linked at Asn145. 14 LRR repeats span residues 146 to 169 (LSML…ARNL), 170 to 195 (RKLR…LFEL), 197 to 219 (HIIY…EFGN), 220 to 244 (LNKL…ISNL), 246 to 267 (QLTE…VQNL), 268 to 291 (TKLS…LFTM), 293 to 316 (FLSY…SSSS), 317 to 340 (SRLE…ISKL), 342 to 364 (NLKE…LFSS), 365 to 390 (LKSL…SYIP), 391 to 412 (STLE…VFKT), 413 to 437 (LHNL…LWSL), 439 to 462 (RLSS…VLVN), and 463 to 486 (SSVQ…PLSI). N-linked (GlcNAc...) asparagine glycosylation is found at Asn189, Asn207, Asn243, and Asn266. 2 N-linked (GlcNAc...) asparagine glycosylation sites follow: Asn305 and Asn312. Asn352 carries N-linked (GlcNAc...) asparagine glycosylation. Asn462 carries an N-linked (GlcNAc...) asparagine glycan. An LRR 17; degenerate repeat occupies 487–506 (NYFSAIDNRFGGDIPLSICN). Residues Asn506 and Asn519 are each glycosylated (N-linked (GlcNAc...) asparagine). 10 LRR repeats span residues 507-528 (RSSL…PPCL), 529-552 (SNLL…YYED), 554-576 (PLRS…LINC), 578-600 (ALQF…LKAL), 601-624 (PKLQ…NEGP), 627-651 (FPEL…FFVN), 701-724 (TSSA…IGLL), 725-747 (KALI…SFAN), 748-772 (LKKM…LRTL), and 774-797 (FLAY…QITG). Asn575 is a glycosylation site (N-linked (GlcNAc...) asparagine). Asn731 is a glycosylation site (N-linked (GlcNAc...) asparagine). Asn779 is a glycosylation site (N-linked (GlcNAc...) asparagine). Residues 847 to 867 (VAIGYGIGVLLGLAIAQLISL) form a helical membrane-spanning segment. Topologically, residues 868-883 (YKPKWLASLVIKSRNC) are cytoplasmic.

It belongs to the RLP family.

The protein localises to the cell membrane. The sequence is that of Receptor-like protein 40 from Arabidopsis thaliana (Mouse-ear cress).